We begin with the raw amino-acid sequence, 129 residues long: Small ribosomal subunit protein uS11 (129 aa).

It belongs to the universal ribosomal protein uS11 family. In terms of assembly, part of the 30S ribosomal subunit. Interacts with proteins S7 and S18. Binds to IF-3.

Functionally, located on the platform of the 30S subunit, it bridges several disparate RNA helices of the 16S rRNA. Forms part of the Shine-Dalgarno cleft in the 70S ribosome. The polypeptide is Small ribosomal subunit protein uS11 (Lactobacillus gasseri (strain ATCC 33323 / DSM 20243 / BCRC 14619 / CIP 102991 / JCM 1131 / KCTC 3163 / NCIMB 11718 / NCTC 13722 / AM63)).